Here is a 434-residue protein sequence, read N- to C-terminus: Trigger factor (434 aa).

Residues 161-246 enclose the PPIase FKBP-type domain; it reads GDRVVIDFAG…VKGVEAPILP (86 aa).

The protein belongs to the FKBP-type PPIase family. Tig subfamily.

It localises to the cytoplasm. The catalysed reaction is [protein]-peptidylproline (omega=180) = [protein]-peptidylproline (omega=0). Functionally, involved in protein export. Acts as a chaperone by maintaining the newly synthesized protein in an open conformation. Functions as a peptidyl-prolyl cis-trans isomerase. This chain is Trigger factor, found in Aromatoleum aromaticum (strain DSM 19018 / LMG 30748 / EbN1) (Azoarcus sp. (strain EbN1)).